The sequence spans 387 residues: TSC22 domain family protein 4 (387 aa).

Disordered stretches follow at residues 1–85 (MSGG…GEPY) and 135–232 (ISTP…RRDG). Over residues 28 to 51 (SDPPAPPAPAGPPPRLPNGEPNPD) the composition is skewed to pro residues. Threonine 57 is modified (phosphothreonine). A phosphoserine mark is found at serine 62 and serine 165. Position 183 is a phosphothreonine (threonine 183). Phosphoserine is present on residues serine 187 and serine 189. The residue at position 223 (threonine 223) is a Phosphothreonine. Phosphoserine occurs at positions 254, 258, and 271. A leucine-zipper region spans residues 336-357 (LKEQIRDLAERNAALEQENGLL). Serine 362 bears the Phosphoserine mark. A disordered region spans residues 368–387 (QLPSSGLPRLGPSAPNGPSI).

Belongs to the TSC-22/Dip/Bun family. In terms of assembly, forms a homodimer or heterodimer. Forms a heterodimer with TSC22D1 isoforms 1 and 2. Interacts with NRBP1.

The protein localises to the nucleus. Its subcellular location is the cytoplasm. The protein resides in the cell projection. It localises to the dendrite. It is found in the synapse. Its function is as follows. Binds DNA and acts as a transcriptional repressor. Involved in the regulation of systematic glucose homeostasis and insulin sensitivity, via transcriptional repression of downstream insulin signaling targets such as OBP2A/LCN13. Acts as a negative regulator of lipogenic gene expression in hepatocytes and thereby mediates the control of very low-density lipoprotein release. May play a role in neurite elongation and survival. In Rattus norvegicus (Rat), this protein is TSC22 domain family protein 4.